Here is a 629-residue protein sequence, read N- to C-terminus: Nicotinic receptor-associated protein 1 (629 aa).

C2 domains are found at residues 1 to 144 (MNQP…KAHL) and 162 to 299 (RTGS…ELLL). Ca(2+) is bound by residues D33, D39, D108, D110, D122, D192, D198, D254, D256, and D274. In terms of domain architecture, VWFA spans 342 to 561 (EFAVAVDFTA…LDPDVVQENL (220 aa)). Disordered regions lie at residues 581–600 (GFQP…PPDY) and 607–629 (IGRR…PPMY).

It belongs to the copine family. As to quaternary structure, interacts with nicotinic acetylcholine receptor. Requires Ca(2+) as cofactor.

It is found in the cell membrane. Functionally, exhibits calcium-dependent phospholipid binding properties. May function in membrane trafficking. Regulates synaptic levels of nicotinic acetylcholine receptor subunit lev-1 and unc-38 in the nerve cord. Involved in nicotinic acetylcholine receptor (nAChR)-mediated sensitivity to nicotine and levamisole. Affects directional sperm motility. In Caenorhabditis briggsae, this protein is Nicotinic receptor-associated protein 1.